A 272-amino-acid chain; its full sequence is Cytochrome c1 (272 aa).

Positions M1–A24 are cleaved as a signal peptide. C61, C64, H65, and M200 together coordinate heme c. Residues L244–A261 traverse the membrane as a helical segment.

The main subunits of complex b-c1 are: cytochrome b, cytochrome c1 and the Rieske protein. Post-translationally, binds 1 heme c group covalently per subunit.

The protein resides in the cell membrane. Component of the ubiquinol-cytochrome c reductase complex (complex III or cytochrome b-c1 complex), which is a respiratory chain that generates an electrochemical potential coupled to ATP synthesis. The sequence is that of Cytochrome c1 (petC) from Rhodospirillum rubrum.